We begin with the raw amino-acid sequence, 343 residues long: Dihydroorotate dehydrogenase (quinone) (343 aa).

Residues 65-69 (AGFDK) and Thr89 each bind FMN. Lys69 is a substrate binding site. Residue 114 to 118 (NRMGF) coordinates substrate. FMN contacts are provided by Asn145 and Asn178. Asn178 serves as a coordination point for substrate. The Nucleophile role is filled by Ser181. Asn183 is a binding site for substrate. Positions 215 and 243 each coordinate FMN. Residue 244–245 (NT) participates in substrate binding. FMN contacts are provided by residues Gly269, Gly298, and 319-320 (YT).

Belongs to the dihydroorotate dehydrogenase family. Type 2 subfamily. As to quaternary structure, monomer. FMN serves as cofactor.

It localises to the cell membrane. It catalyses the reaction (S)-dihydroorotate + a quinone = orotate + a quinol. It functions in the pathway pyrimidine metabolism; UMP biosynthesis via de novo pathway; orotate from (S)-dihydroorotate (quinone route): step 1/1. In terms of biological role, catalyzes the conversion of dihydroorotate to orotate with quinone as electron acceptor. The polypeptide is Dihydroorotate dehydrogenase (quinone) (Leifsonia xyli subsp. xyli (strain CTCB07)).